Consider the following 176-residue polypeptide: Probable fimbrial subunit LpfE (176 aa).

Positions 1 to 23 (MKFKRLLHSGIASLSLVACGVNA) are cleaved as a signal peptide.

This sequence belongs to the fimbrial protein family.

It is found in the fimbrium. In terms of biological role, part of the lpfABCC'DE fimbrial operon. LP fimbriae may participate in the interaction with eukaryotic cells by assisting in microcolony formation. This Escherichia coli O157:H7 protein is Probable fimbrial subunit LpfE (lpfE).